A 152-amino-acid chain; its full sequence is Probable methionine-R-sulfoxide reductase B (152 aa).

In terms of domain architecture, MsrB spans 27–151 (QTEWKSVLPN…NSVCMAFEKK (125 aa)). 4 residues coordinate Zn(2+): C66, C69, C116, and C119. C140 acts as the Nucleophile in catalysis.

The protein belongs to the MsrB Met sulfoxide reductase family. Requires Zn(2+) as cofactor.

The enzyme catalyses L-methionyl-[protein] + [thioredoxin]-disulfide + H2O = L-methionyl-(R)-S-oxide-[protein] + [thioredoxin]-dithiol. Functionally, methionine-sulfoxide reductase that specifically reduces methionine (R)-sulfoxide back to methionine. While in many cases, methionine oxidation is the result of random oxidation following oxidative stress, methionine oxidation is also a post-translational modification that takes place on specific residue. This chain is Probable methionine-R-sulfoxide reductase B, found in Caenorhabditis elegans.